Consider the following 440-residue polypeptide: Gap junction gamma-2 protein (440 aa).

At 1–21 (MTNMSWSFLTRLLEEIHNHST) the chain is on the cytoplasmic side. Residues 22 to 42 (FVGKVWLTVLVVFRIVLTAVG) traverse the membrane as a helical segment. The Extracellular portion of the chain corresponds to 43–78 (GESIYSDEQSKFTCNTRQPGCDNVCYDAFAPLSHVR). The chain crosses the membrane as a helical span at residues 79 to 99 (FWVFQIVVISTPSVMYLGYAV). At 100-223 (HRLARASEQE…AQLVVRAAFE (124 aa)) the chain is on the cytoplasmic side. The interval 108–199 (QERRRALRRR…TPGPAGQHDG (92 aa)) is disordered. Positions 112–124 (RALRRRPGTRRLP) are enriched in basic residues. Residues 136–149 (PDTTDLGEAEPILA) show a composition bias toward low complexity. Residues 150–173 (LEEDEDEEPGAPEGPGEDTEEERA) show a composition bias toward acidic residues. The chain crosses the membrane as a helical span at residues 224 to 244 (VAFLVGQYLLYGFEVPPFFAC). The Extracellular segment spans residues 245–264 (SRQPCPHVVDCFVSRPTEKT). The chain crosses the membrane as a helical span at residues 265 to 285 (VFLLVMYVVSCLCLLLNLCEM). Over 286–440 (AHLGLGSAQD…SRDGKATVWI (155 aa)) the chain is Cytoplasmic. The segment at 369 to 440 (DRDSPPCAGL…SRDGKATVWI (72 aa)) is disordered. A Phosphoserine modification is found at serine 372. The segment covering 388-401 (VGGLASGTGSATSG) has biased composition (low complexity).

The protein belongs to the connexin family. Gamma-type subfamily. In terms of assembly, a connexon is composed of a hexamer of connexins. Interacts with TJP1. Mainly expressed by oligodendrocytes in the central nervous system (at protein level).

It localises to the cell membrane. It is found in the cell junction. Its subcellular location is the gap junction. One gap junction consists of a cluster of closely packed pairs of transmembrane channels, the connexons, through which materials of low MW diffuse from one cell to a neighboring cell. May play a role in myelination in central and peripheral nervous systems. The polypeptide is Gap junction gamma-2 protein (Gjc2) (Mus musculus (Mouse)).